The following is a 574-amino-acid chain: Lysyl oxidase homolog 1 (574 aa).

A signal peptide spans 1 to 25 (MALARGSRQLGALVWGACLCVLVHG). A propeptide spanning residues 26–95 (QQAQPGQGSD…RRSHGSPRRR (70 aa)) is cleaved from the precursor. 2 disordered regions span residues 62–123 (VPAG…GFGQ) and 239–374 (GGEE…DLVP). Positions 86–96 (RRSHGSPRRRQ) are enriched in basic residues. 2 stretches are compositionally biased toward pro residues: residues 255–268 (PERP…PPPD) and 313–332 (YANP…PPYL). Residues 311-369 (PPYANPPPEAYGPPRALEPPYLPVRSSDTPPPGGERNGAQQGRLSVGSVYRPNQNGRGL) are interaction with FBLN5. The tract at residues 370-574 (PDLVPDPNYV…SATNCKIVQS (205 aa)) is lysyl-oxidase like. Intrachain disulfides connect Cys395–Cys401, Cys448–Cys497, Cys481–Cys487, Cys508–Cys518, and Cys555–Cys569. His449, His451, and His453 together coordinate Cu cation. The lysine tyrosylquinone (Lys-Tyr); alternate cross-link spans 477–512 (KASFCLEDSTCDFGNLKRYACTSHTQGLSPGCYDTY). Residue Tyr512 is modified to 2',4',5'-topaquinone; alternate.

The protein belongs to the lysyl oxidase family. As to quaternary structure, interacts (via propeptide) with EFEMP2. Interacts with FBLN5. Cu cation is required as a cofactor. The cofactor is lysine tyrosylquinone residue. The lysine tyrosylquinone cross-link (LTQ) is generated by condensation of the epsilon-amino group of a lysine with a topaquinone produced by oxidation of tyrosine. In terms of processing, proteolytic processing by a furin-like protease causes removal of N-terminal propeptide resulting in an enzyme largely inactive, but further proteolytic processing by BMP1 results in enzyme activation. As to expression, expressed in ocular tissues including the iris, ciliary body, lens and optic nerve. Not detected in the retina.

Its subcellular location is the secreted. It is found in the extracellular space. The protein localises to the extracellular matrix. It catalyses the reaction L-lysyl-[protein] + O2 + H2O = (S)-2-amino-6-oxohexanoyl-[protein] + H2O2 + NH4(+). Functionally, catalyzes the oxidative deamination of lysine and hydroxylysine residues in collagen and elastin, resulting in the formation of covalent cross-linkages, and the stabilization of collagen and elastin fibers. Essential for the elastic fiber homeostasis and for their maintenance at adult age. This chain is Lysyl oxidase homolog 1 (LOXL1), found in Homo sapiens (Human).